Reading from the N-terminus, the 856-residue chain is DNA mismatch repair protein MutS (856 aa).

600–607 (GPNMSGKS) serves as a coordination point for ATP.

Belongs to the DNA mismatch repair MutS family.

Functionally, this protein is involved in the repair of mismatches in DNA. It is possible that it carries out the mismatch recognition step. This protein has a weak ATPase activity. The sequence is that of DNA mismatch repair protein MutS from Lactobacillus acidophilus (strain ATCC 700396 / NCK56 / N2 / NCFM).